A 387-amino-acid chain; its full sequence is Protein disulfide isomerase pTAC5, chloroplastic (387 aa).

Residues 1 to 40 (MASSSLPLSLPFPLRSLTSTTRSLPFQCSPLFFSIPSSIV) constitute a chloroplast transit peptide. Coiled coils occupy residues 72-106 (EQRW…LGNS) and 143-163 (REQI…AEEK). The CR-type zinc finger occupies 318–387 (PVDRSESTNT…CDVCDGKKNL (70 aa)).

As to quaternary structure, interacts with HSP21; the formed complex associates with the plastid-encoded RNA polymerase (PEP) complex not only during transcription initiation, but also during elongation and termination, and with a stronger efficiency in illuminated chloroplasts. Binds to promoter regions of PEP-dependent genes, especially after a heat stress. Interacts with FLN2.

The protein localises to the plastid. Its subcellular location is the chloroplast stroma. It localises to the chloroplast nucleoid. It carries out the reaction Catalyzes the rearrangement of -S-S- bonds in proteins.. Exhibits zinc-dependent disulfide isomerase activity. Required for seedling and chloroplast development under heat stress, probably by maintaining plastid-encoded RNA polymerase (PEP)-dependent transcription. This is Protein disulfide isomerase pTAC5, chloroplastic from Arabidopsis thaliana (Mouse-ear cress).